Consider the following 304-residue polypeptide: Ribosomal RNA large subunit methyltransferase F (304 aa).

The protein belongs to the methyltransferase superfamily. METTL16/RlmF family.

The protein resides in the cytoplasm. The catalysed reaction is adenosine(1618) in 23S rRNA + S-adenosyl-L-methionine = N(6)-methyladenosine(1618) in 23S rRNA + S-adenosyl-L-homocysteine + H(+). Its function is as follows. Specifically methylates the adenine in position 1618 of 23S rRNA. The protein is Ribosomal RNA large subunit methyltransferase F of Klebsiella pneumoniae subsp. pneumoniae (strain ATCC 700721 / MGH 78578).